The primary structure comprises 230 residues: UPF0173 metal-dependent hydrolase Mbar_A3716 (230 aa).

It belongs to the UPF0173 family.

This Methanosarcina barkeri (strain Fusaro / DSM 804) protein is UPF0173 metal-dependent hydrolase Mbar_A3716.